A 263-amino-acid polypeptide reads, in one-letter code: Chymotrypsinogen 2 (263 aa).

An N-terminal signal peptide occupies residues 1-18 (MAFLWLLSCFALLGTAFG). Disulfide bonds link Cys19/Cys140, Cys60/Cys76, Cys154/Cys219, Cys186/Cys200, and Cys209/Cys238. The Peptidase S1 domain maps to 34–261 (IVNGEDAVPG…LIPWVQQILQ (228 aa)). His75 serves as the catalytic Charge relay system. Ser93 is modified (phosphoserine). The active-site Charge relay system is Asp120. Residue Ser213 is the Charge relay system of the active site.

Belongs to the peptidase S1 family.

The protein resides in the secreted. It localises to the extracellular space. It catalyses the reaction Preferential cleavage: Tyr-|-Xaa, Trp-|-Xaa, Phe-|-Xaa, Leu-|-Xaa.. This is Chymotrypsinogen 2 (CTRB1) from Canis lupus familiaris (Dog).